Reading from the N-terminus, the 225-residue chain is NAD(P)H-quinone oxidoreductase subunit K, chloroplastic (225 aa).

Residues C43, C44, C108, and C139 each coordinate [4Fe-4S] cluster.

The protein belongs to the complex I 20 kDa subunit family. In terms of assembly, NDH is composed of at least 16 different subunits, 5 of which are encoded in the nucleus. The cofactor is [4Fe-4S] cluster.

The protein localises to the plastid. Its subcellular location is the chloroplast thylakoid membrane. The catalysed reaction is a plastoquinone + NADH + (n+1) H(+)(in) = a plastoquinol + NAD(+) + n H(+)(out). The enzyme catalyses a plastoquinone + NADPH + (n+1) H(+)(in) = a plastoquinol + NADP(+) + n H(+)(out). NDH shuttles electrons from NAD(P)H:plastoquinone, via FMN and iron-sulfur (Fe-S) centers, to quinones in the photosynthetic chain and possibly in a chloroplast respiratory chain. The immediate electron acceptor for the enzyme in this species is believed to be plastoquinone. Couples the redox reaction to proton translocation, and thus conserves the redox energy in a proton gradient. This Brachypodium distachyon (Purple false brome) protein is NAD(P)H-quinone oxidoreductase subunit K, chloroplastic.